We begin with the raw amino-acid sequence, 484 residues long: Polyamine oxidase 3 (484 aa).

FAD contacts are provided by Glu-47, Arg-55, Val-236, and Glu-423. The Microbody targeting signal motif lies at 482–484; it reads SRL.

Belongs to the flavin monoamine oxidase family. It depends on FAD as a cofactor. In terms of tissue distribution, widely expressed.

Its subcellular location is the peroxisome. The catalysed reaction is spermine + O2 + H2O = 3-aminopropanal + spermidine + H2O2. The enzyme catalyses N(1)-acetylspermine + O2 + H2O = 3-acetamidopropanal + spermidine + H2O2. It catalyses the reaction norspermine + O2 + H2O = norspermidine + 3-aminopropanal + H2O2. It carries out the reaction spermidine + O2 + H2O = 3-aminopropanal + putrescine + H2O2. The catalysed reaction is thermospermine + O2 + H2O = 3-aminopropanal + spermidine + H2O2. The protein operates within amine and polyamine degradation; spermine degradation. It participates in amine and polyamine degradation; spermidine degradation. In terms of biological role, flavoenzyme involved in polyamine back-conversion. Catalyzes the oxidation of the secondary amino group of polyamines, such as spermine, spermidine and their acetyl derivatives. Substrate preference is spermidine &gt; norspermine &gt; thermospermine &gt; N(1)-acetylspermine &gt; spermine. No activity detected when putrescine is used as substrate. Plays an important role in the regulation of polyamine intracellular concentration. The sequence is that of Polyamine oxidase 3 from Oryza sativa subsp. japonica (Rice).